A 334-amino-acid chain; its full sequence is WD repeat-containing protein 54 (334 aa).

WD repeat units follow at residues glycine 162–threonine 206, isoleucine 208–glutamine 247, and alanine 250–tyrosine 289.

As to quaternary structure, homodimer and homotrimer; forms tight forms of dimers and trimers. Interacts with IZUMO1 and IZUMO1R/JUNO. In terms of processing, cross-linked to tightly form both dimers and trimers by TGM2. Cross-linking enhances the activation of EGF receptor-mediated signaling pathway. Cross-linking is inhibited by EGF. Ubiquitinated. EGF increases ubiquitination. In terms of tissue distribution, expressed in epithelial cells (at protein level). Isoform 3 expression is highly increased in colorectal cancer cells.

It localises to the vesicle. The protein resides in the cytoplasm. Its subcellular location is the cell membrane. Plays a role in the adhesion and fusion of the sperm-oocyte membrane through its interactions with IZUMO1 and IZUMO1R/JUNO. When cross-linked to form dimers and trimers, it has a regulatory effect on ERK signaling pathway activity in response to EGF stimulation. Colocalizes with the EGF receptor in WDR54-specific vesicle where it sustains the internalization and controls the degradation of the EGF receptor after EGF stimulation. This Homo sapiens (Human) protein is WD repeat-containing protein 54.